A 309-amino-acid chain; its full sequence is Serine/threonine-protein phosphatase 2A catalytic subunit beta isoform (309 aa).

Residues Asp-57, His-59, Asp-85, and Asn-117 each contribute to the Mn(2+) site. The Proton donor role is filled by His-118. Residues His-167 and His-241 each contribute to the Mn(2+) site. A Phosphotyrosine modification is found at Tyr-307. Leu-309 is subject to Leucine methyl ester.

This sequence belongs to the PPP phosphatase family. PP-1 subfamily. Found in a complex with at least ARL2, PPP2CB, PPP2R1A, PPP2R2A, PPP2R5E and TBCD. Interacts with TBCD. PP2A consists of a common heterodimeric core enzyme (composed of a 36 kDa catalytic subunit (subunit C) and a 65 kDa constant regulatory subunit (PR65) (subunit A)) that associates with a variety of regulatory subunits. Proteins that associate with the core dimer include three families of regulatory subunits B (the R2/B/PR55/B55, R3/B''/PR72/PR130/PR59 and R5/B'/B56 families), the 48 kDa variable regulatory subunit, viral proteins, and cell signaling molecules. Binds PPME1. May indirectly interact with SGO1, most probably through regulatory B56 subunits. Interacts with CTTNBP2NL. Interacts with PTPA. Part of the core of STRIPAK complexes composed of PP2A catalytic and scaffolding subunits, the striatins (PP2A regulatory subunits), the striatin-associated proteins MOB4, STRIP1 and STRIP2, PDCD10 and members of the STE20 kinases, such as STK24 and STK26. Requires Mn(2+) as cofactor. Reversibly methyl esterified on Leu-309 by leucine carboxyl methyltransferase 1 (Lcmt1) and protein phosphatase methylesterase 1 (PPME1). Carboxyl methylation influences the affinity of the catalytic subunit for the different regulatory subunits, thereby modulating the PP2A holoenzyme's substrate specificity, enzyme activity and cellular localization. In terms of processing, phosphorylation of either threonine (by autophosphorylation-activated protein kinase) or tyrosine results in inactivation of the phosphatase. Auto-dephosphorylation has been suggested as a mechanism for reactivation. Post-translationally, may be monoubiquitinated by NOSIP.

The protein resides in the cytoplasm. Its subcellular location is the nucleus. It localises to the chromosome. It is found in the centromere. The protein localises to the cytoskeleton. The protein resides in the spindle pole. It carries out the reaction O-phospho-L-seryl-[protein] + H2O = L-seryl-[protein] + phosphate. The catalysed reaction is O-phospho-L-threonyl-[protein] + H2O = L-threonyl-[protein] + phosphate. Catalytic subunit of protein phosphatase 2A (PP2A), a serine/threonine phosphatase involved in the regulation of a wide variety of enzymes, signal transduction pathways, and cellular events. PP2A can modulate the activity of phosphorylase B kinase, casein kinase 2, mitogen-stimulated S6 kinase, and MAP-2 kinase. Part of the striatin-interacting phosphatase and kinase (STRIPAK) complexes. STRIPAK complexes have critical roles in protein (de)phosphorylation and are regulators of multiple signaling pathways including Hippo, MAPK, nuclear receptor and cytoskeleton remodeling. Different types of STRIPAK complexes are involved in a variety of biological processes such as cell growth, differentiation, apoptosis, metabolism and immune regulation. The polypeptide is Serine/threonine-protein phosphatase 2A catalytic subunit beta isoform (PPP2CB) (Oryctolagus cuniculus (Rabbit)).